Reading from the N-terminus, the 382-residue chain is Galactokinase (382 aa).

Residue Glu-34–Asp-37 coordinates substrate. Gly-124–Ser-130 serves as a coordination point for ATP. Residues Ser-130 and Glu-162 each contribute to the Mg(2+) site. The Proton acceptor role is filled by Asp-174. Substrate is bound at residue Tyr-223.

This sequence belongs to the GHMP kinase family. GalK subfamily.

Its subcellular location is the cytoplasm. It catalyses the reaction alpha-D-galactose + ATP = alpha-D-galactose 1-phosphate + ADP + H(+). The protein operates within carbohydrate metabolism; galactose metabolism. Functionally, catalyzes the transfer of the gamma-phosphate of ATP to D-galactose to form alpha-D-galactose-1-phosphate (Gal-1-P). This chain is Galactokinase, found in Citrobacter koseri (strain ATCC BAA-895 / CDC 4225-83 / SGSC4696).